The sequence spans 113 residues: Translation initiation factor 1A (113 aa).

In terms of domain architecture, S1-like spans 12–87 (EVIRVPLPEG…KRGDIVYRYT (76 aa)).

It belongs to the eIF-1A family.

Seems to be required for maximal rate of protein biosynthesis. Enhances ribosome dissociation into subunits and stabilizes the binding of the initiator Met-tRNA(I) to 40 S ribosomal subunits. The protein is Translation initiation factor 1A (eIF1A) of Pyrococcus abyssi (strain GE5 / Orsay).